An 86-amino-acid polypeptide reads, in one-letter code: YcgL domain-containing protein XCV4171 (86 aa).

The 83-residue stretch at 1–83 folds into the YcgL domain; it reads MHAYVYKSQR…PKTIVLAGEC (83 aa).

This Xanthomonas euvesicatoria pv. vesicatoria (strain 85-10) (Xanthomonas campestris pv. vesicatoria) protein is YcgL domain-containing protein XCV4171.